Consider the following 66-residue polypeptide: Large ribosomal subunit protein bL33c (66 aa).

The protein belongs to the bacterial ribosomal protein bL33 family.

The protein resides in the plastid. The protein localises to the chloroplast. This Dioscorea elephantipes (Elephant's foot yam) protein is Large ribosomal subunit protein bL33c.